The sequence spans 354 residues: Peptide chain release factor 1 (354 aa).

Gln232 is modified (N5-methylglutamine).

Belongs to the prokaryotic/mitochondrial release factor family. Methylated by PrmC. Methylation increases the termination efficiency of RF1.

Its subcellular location is the cytoplasm. In terms of biological role, peptide chain release factor 1 directs the termination of translation in response to the peptide chain termination codons UAG and UAA. This chain is Peptide chain release factor 1, found in Jannaschia sp. (strain CCS1).